A 323-amino-acid chain; its full sequence is MKMHQLRYIVEIVNQNLNVTEAANALYTSQPGISKQVRLLEDELGLEIFERHGKHIKSITPAGKKIISIARELLVKAQGIRAVADEYTRPNHGVLRIATTNTQARYMLPSVIERFSKKYPDVSLHIHQGSPTQIHDALMSGEVDLAITTEAPYLFDDLVQIPCYWWNRAVIVSPEHPLAKVKELTIEELGKYPLVTYTFGFTGVSDLDYAFNSAGILPNIVFTATDADVIKTYVRLGLGVGIMASMAHTALDTDLVLIDASHLFRPSMTNIAFKHSTFLRNYMYDFMEYFSPHLTRSVVEKAERLRDNNSVKKLFEGIELETK.

Residues Met1–Thr60 enclose the HTH lysR-type domain. The H-T-H motif DNA-binding region spans Val19–Arg38.

It belongs to the LysR transcriptional regulatory family. Homotetramer.

It is found in the cytoplasm. Functionally, this protein is a positive regulator of gene expression for the cysteine regulon. The inducer for CysB is N-acetylserine. The polypeptide is HTH-type transcriptional regulator CysB (cysB) (Haemophilus influenzae (strain ATCC 51907 / DSM 11121 / KW20 / Rd)).